Here is a 293-residue protein sequence, read N- to C-terminus: Glutamyl-Q tRNA(Asp) synthetase (293 aa).

L-glutamate-binding positions include 26-30 (RFAPS) and D62. The 'HIGH' region signature appears at 29–39 (PSPTGLLHLGN). Zn(2+)-binding residues include C118, C120, Y131, and C135. Positions 178 and 196 each coordinate L-glutamate. Positions 234-238 (KLSKR) match the 'KMSKS' region motif. K237 lines the ATP pocket.

It belongs to the class-I aminoacyl-tRNA synthetase family. GluQ subfamily. It depends on Zn(2+) as a cofactor.

Its function is as follows. Catalyzes the tRNA-independent activation of glutamate in presence of ATP and the subsequent transfer of glutamate onto a tRNA(Asp). Glutamate is transferred on the 2-amino-5-(4,5-dihydroxy-2-cyclopenten-1-yl) moiety of the queuosine in the wobble position of the QUC anticodon. The sequence is that of Glutamyl-Q tRNA(Asp) synthetase from Synechococcus sp. (strain CC9605).